We begin with the raw amino-acid sequence, 339 residues long: Cytochrome c biogenesis protein CcsA (339 aa).

Helical transmembrane passes span 6–26 (LEHI…LVFW), 37–57 (IGSL…GLLL), 71–91 (LYES…VSEI), 97–117 (WLGI…TVGL), 142–162 (MMIP…ALLI), 247–267 (IISL…VWVN), and 281–299 (TWAL…IRMI).

This sequence belongs to the CcmF/CycK/Ccl1/NrfE/CcsA family. May interact with Ccs1.

The protein localises to the plastid. Its subcellular location is the chloroplast thylakoid membrane. Required during biogenesis of c-type cytochromes (cytochrome c6 and cytochrome f) at the step of heme attachment. This is Cytochrome c biogenesis protein CcsA from Anthoceros angustus (Hornwort).